Here is a 249-residue protein sequence, read N- to C-terminus: Isoprenyl transferase (249 aa).

The active site involves Asp-25. Asp-25 contacts Mg(2+). Residues 26–29 (GNGR), Trp-30, Arg-38, His-42, and 70–72 (STE) contribute to the substrate site. The active-site Proton acceptor is Asn-73. Substrate is bound by residues Trp-74, Arg-76, Arg-197, and 203 to 205 (RLS). Glu-216 contributes to the Mg(2+) binding site.

It belongs to the UPP synthase family. In terms of assembly, homodimer. Requires Mg(2+) as cofactor.

Functionally, catalyzes the condensation of isopentenyl diphosphate (IPP) with allylic pyrophosphates generating different type of terpenoids. The protein is Isoprenyl transferase of Streptococcus pyogenes serotype M3 (strain ATCC BAA-595 / MGAS315).